We begin with the raw amino-acid sequence, 622 residues long: Glucose 1,6-bisphosphate synthase (622 aa).

Residues arginine 73 and serine 175 each contribute to the alpha-D-glucose 1,6-bisphosphate site. The active-site Phosphoserine intermediate is the serine 175. Residues serine 175, aspartate 332, and aspartate 334 each coordinate Mg(2+). The residue at position 175 (serine 175) is a Phosphoserine. Aspartate 336, arginine 337, glutamate 434, serine 436, and lysine 448 together coordinate alpha-D-glucose 1,6-bisphosphate.

It belongs to the phosphohexose mutase family.

The protein localises to the cytoplasm. It is found in the cytosol. It catalyses the reaction (2R)-3-phospho-glyceroyl phosphate + alpha-D-glucose 1-phosphate = alpha-D-glucose 1,6-bisphosphate + (2R)-3-phosphoglycerate + H(+). The enzyme catalyses alpha-D-glucose 6-phosphate + (2R)-3-phospho-glyceroyl phosphate = alpha-D-glucose 1,6-bisphosphate + (2R)-3-phosphoglycerate + H(+). It carries out the reaction (2R)-3-phospho-glyceroyl phosphate + alpha-D-ribose 1-phosphate = alpha-D-ribose 1,5-bisphosphate + (2R)-3-phosphoglycerate + H(+). The catalysed reaction is 2-deoxy-alpha-D-ribose 1-phosphate + (2R)-3-phospho-glyceroyl phosphate = 2-deoxy-alpha-D-ribose 1,5-bisphosphate + (2R)-3-phosphoglycerate + H(+). It catalyses the reaction (2R)-3-phospho-glyceroyl phosphate + alpha-D-mannose 1-phosphate = alpha-D-mannose 1,6-bisphosphate + (2R)-3-phosphoglycerate + H(+). Functionally, glucose 1,6-bisphosphate synthase using 1,3-bisphosphoglycerate as a phosphate donor and a series of 1-phosphate sugars, including glucose 1-phosphate, mannose 1-phosphate, ribose 1-phosphate and deoxyribose 1-phosphate, as acceptors. In vitro, also exhibits very low phosphopentomutase and phosphoglucomutase activity which are most probably not physiologically relevant. In Homo sapiens (Human), this protein is Glucose 1,6-bisphosphate synthase.